A 200-amino-acid polypeptide reads, in one-letter code: Small ribosomal subunit protein uS4 (200 aa).

Residues threonine 22–lysine 42 form a disordered region. In terms of domain architecture, S4 RNA-binding spans alanine 92–lysine 152.

This sequence belongs to the universal ribosomal protein uS4 family. In terms of assembly, part of the 30S ribosomal subunit. Contacts protein S5. The interaction surface between S4 and S5 is involved in control of translational fidelity.

In terms of biological role, one of the primary rRNA binding proteins, it binds directly to 16S rRNA where it nucleates assembly of the body of the 30S subunit. Functionally, with S5 and S12 plays an important role in translational accuracy. In Bacillus cereus (strain B4264), this protein is Small ribosomal subunit protein uS4.